The primary structure comprises 218 residues: Hypoxanthine-guanine phosphoribosyltransferase (218 aa).

At Ala2 the chain carries N-acetylalanine. Lys69 is a GMP binding site. Lys103 is subject to N6-acetyllysine. Lys115 participates in a covalent cross-link: Glycyl lysine isopeptide (Lys-Gly) (interchain with G-Cter in SUMO1); alternate. Residue Lys115 forms a Glycyl lysine isopeptide (Lys-Gly) (interchain with G-Cter in SUMO2); alternate linkage. GMP-binding positions include 134-142, Lys166, 186-188, and Asp194; these read EDIIDTGKT and KFV. Asp138 serves as the catalytic Proton acceptor. At Thr142 the chain carries Phosphothreonine. Residue Asp194 coordinates Mg(2+).

Belongs to the purine/pyrimidine phosphoribosyltransferase family. Homotetramer. Mg(2+) is required as a cofactor.

It is found in the cytoplasm. The enzyme catalyses IMP + diphosphate = hypoxanthine + 5-phospho-alpha-D-ribose 1-diphosphate. It catalyses the reaction GMP + diphosphate = guanine + 5-phospho-alpha-D-ribose 1-diphosphate. It participates in purine metabolism; IMP biosynthesis via salvage pathway; IMP from hypoxanthine: step 1/1. Converts guanine to guanosine monophosphate, and hypoxanthine to inosine monophosphate. Transfers the 5-phosphoribosyl group from 5-phosphoribosylpyrophosphate onto the purine. Plays a central role in the generation of purine nucleotides through the purine salvage pathway. The sequence is that of Hypoxanthine-guanine phosphoribosyltransferase (HPRT1) from Cricetulus griseus (Chinese hamster).